The primary structure comprises 424 residues: UDP-N-acetylglucosamine 1-carboxyvinyltransferase (424 aa).

Residue 22–23 (KN) participates in phosphoenolpyruvate binding. Arg-93 contributes to the UDP-N-acetyl-alpha-D-glucosamine binding site. Cys-117 serves as the catalytic Proton donor. The residue at position 117 (Cys-117) is a 2-(S-cysteinyl)pyruvic acid O-phosphothioketal. Residues 122–126 (RPVDL), 162–165 (KVSV), Asp-307, and Ile-329 each bind UDP-N-acetyl-alpha-D-glucosamine.

This sequence belongs to the EPSP synthase family. MurA subfamily.

It is found in the cytoplasm. The enzyme catalyses phosphoenolpyruvate + UDP-N-acetyl-alpha-D-glucosamine = UDP-N-acetyl-3-O-(1-carboxyvinyl)-alpha-D-glucosamine + phosphate. It participates in cell wall biogenesis; peptidoglycan biosynthesis. Cell wall formation. Adds enolpyruvyl to UDP-N-acetylglucosamine. The polypeptide is UDP-N-acetylglucosamine 1-carboxyvinyltransferase (Histophilus somni (strain 129Pt) (Haemophilus somnus)).